The chain runs to 81 residues: Antitoxin MT2731 (81 aa).

Functionally, antitoxin component of a type II toxin-antitoxin (TA) system. Neutralizes the effect of cognate toxin MT2730. The sequence is that of Antitoxin MT2731 from Mycobacterium tuberculosis (strain CDC 1551 / Oshkosh).